A 1273-amino-acid polypeptide reads, in one-letter code: Lysine-specific histone demethylase 2 (1273 aa).

Positions 199–230 (ENFFDANSPSSQQFPSTYPSRSQNPLSSSGDG) are enriched in polar residues. The tract at residues 199–237 (ENFFDANSPSSQQFPSTYPSRSQNPLSSSGDGSTAIHAG) is disordered. A coiled-coil region spans residues 247–307 (FSNYPYPLDA…LSKSVDNAVL (61 aa)). The region spanning 394 to 490 (AAEAARKCNL…YGCLSFDSSF (97 aa)) is the SWIRM domain. Residues 509-551 (IAVV…ILEA), threonine 517, glutamate 550, arginine 558, and 572-573 (TQ) contribute to the FAD site. Residues 542-1198 (LPPKVIILEA…GKILRYQRLT (657 aa)) are demethylase activity. The tract at residues 571–596 (ATQINHHTSNSNSISSNSTSLNPKDV) is disordered. Residues 574–590 (INHHTSNSNSISSNSTS) show a composition bias toward low complexity. A coiled-coil region spans residues 681-767 (SVRISWISQF…NTVDTDFSKD (87 aa)). Residues 1115-1195 (SKPNANPFLL…AYAGKILRYQ (81 aa)) constitute a DNA-binding region (HMG box). FAD is bound by residues aspartate 1147 and 1156–1157 (ET). The disordered stretch occupies residues 1215–1273 (KCQDEPIPDDEARLFMQAQREEEQRKQTQDDNISKSREASDEEYHDDGSSDSGYNGTRY). Basic and acidic residues predominate over residues 1233–1253 (QREEEQRKQTQDDNISKSREA). Residues 1264–1273 (SDSGYNGTRY) are compositionally biased toward polar residues.

It belongs to the flavin monoamine oxidase family. In terms of assembly, component of the SWM histone demethylase complex composed of at least lsd1, lsd2, phf1 and phf2. Interacts directly with lsd1. It depends on FAD as a cofactor.

It localises to the nucleus. Functionally, catalytic component of the SWM histone demethylase complex that specifically demethylates H3K9me2, a specific tag for epigenetic transcriptional activation, thereby acting as a corepressor. Acts by oxidizing the substrate by FAD to generate the corresponding imine that is subsequently hydrolyzed. Has a role in regulating heterochromatin propagation and euchromatic transcription. Also has a gene activating role. The polypeptide is Lysine-specific histone demethylase 2 (lsd2) (Schizosaccharomyces pombe (strain 972 / ATCC 24843) (Fission yeast)).